The chain runs to 118 residues: Large ribosomal subunit protein bL20 (118 aa).

It belongs to the bacterial ribosomal protein bL20 family.

Functionally, binds directly to 23S ribosomal RNA and is necessary for the in vitro assembly process of the 50S ribosomal subunit. It is not involved in the protein synthesizing functions of that subunit. In Acidiphilium cryptum (strain JF-5), this protein is Large ribosomal subunit protein bL20.